The sequence spans 103 residues: Large ribosomal subunit protein uL24 (103 aa).

This sequence belongs to the universal ribosomal protein uL24 family. Part of the 50S ribosomal subunit.

One of two assembly initiator proteins, it binds directly to the 5'-end of the 23S rRNA, where it nucleates assembly of the 50S subunit. In terms of biological role, one of the proteins that surrounds the polypeptide exit tunnel on the outside of the subunit. This is Large ribosomal subunit protein uL24 from Oceanobacillus iheyensis (strain DSM 14371 / CIP 107618 / JCM 11309 / KCTC 3954 / HTE831).